Consider the following 79-residue polypeptide: MNHLPVECPRCAFEDISLLATSPVPGVWDVVQCGRCLYTWRTIEPARRTRRDAYPDSFKLTAEDIENAIEVPAVPPLLK.

Its function is as follows. Involved in the non-oxidative decarboxylation and detoxification of phenolic derivatives under both aerobic and anaerobic conditions, however the precise biochemical function of VdcD in metabolism of phenolic acid is unknown. The chain is Protein VdcD from Streptomyces sp. (strain D7).